A 494-amino-acid polypeptide reads, in one-letter code: Cysteine--tRNA ligase (494 aa).

Cysteine 29 is a Zn(2+) binding site. The 'HIGH' region motif lies at 31–41 (VTVYDHCHIGH). Positions 209, 234, and 238 each coordinate Zn(2+). A 'KMSKS' region motif is present at residues 266–270 (KMSKS). Position 269 (lysine 269) interacts with ATP.

It belongs to the class-I aminoacyl-tRNA synthetase family. Monomer. Zn(2+) is required as a cofactor.

It localises to the cytoplasm. The catalysed reaction is tRNA(Cys) + L-cysteine + ATP = L-cysteinyl-tRNA(Cys) + AMP + diphosphate. The sequence is that of Cysteine--tRNA ligase from Geotalea uraniireducens (strain Rf4) (Geobacter uraniireducens).